A 380-amino-acid chain; its full sequence is Glucose-1-phosphate adenylyltransferase (380 aa).

Alpha-D-glucose 1-phosphate contacts are provided by residues Gly164, 179–180, and Ser190; that span reads EK.

Belongs to the bacterial/plant glucose-1-phosphate adenylyltransferase family. Homotetramer.

The enzyme catalyses alpha-D-glucose 1-phosphate + ATP + H(+) = ADP-alpha-D-glucose + diphosphate. It functions in the pathway glycan biosynthesis; glycogen biosynthesis. Its function is as follows. Involved in the biosynthesis of ADP-glucose, a building block required for the elongation reactions to produce glycogen. Catalyzes the reaction between ATP and alpha-D-glucose 1-phosphate (G1P) to produce pyrophosphate and ADP-Glc. The sequence is that of Glucose-1-phosphate adenylyltransferase from Streptococcus sanguinis (strain SK36).